Consider the following 279-residue polypeptide: Bifunctional protein FolD (279 aa).

Residues 159–161 (GRS), serine 184, and threonine 225 each bind NADP(+).

The protein belongs to the tetrahydrofolate dehydrogenase/cyclohydrolase family. Homodimer.

It catalyses the reaction (6R)-5,10-methylene-5,6,7,8-tetrahydrofolate + NADP(+) = (6R)-5,10-methenyltetrahydrofolate + NADPH. The enzyme catalyses (6R)-5,10-methenyltetrahydrofolate + H2O = (6R)-10-formyltetrahydrofolate + H(+). Its pathway is one-carbon metabolism; tetrahydrofolate interconversion. Its function is as follows. Catalyzes the oxidation of 5,10-methylenetetrahydrofolate to 5,10-methenyltetrahydrofolate and then the hydrolysis of 5,10-methenyltetrahydrofolate to 10-formyltetrahydrofolate. This is Bifunctional protein FolD from Methanospirillum hungatei JF-1 (strain ATCC 27890 / DSM 864 / NBRC 100397 / JF-1).